The primary structure comprises 492 residues: N-succinylglutamate 5-semialdehyde dehydrogenase (492 aa).

Gly220–Gly225 provides a ligand contact to NAD(+). Residues Glu243 and Cys277 contribute to the active site.

Belongs to the aldehyde dehydrogenase family. AstD subfamily.

It catalyses the reaction N-succinyl-L-glutamate 5-semialdehyde + NAD(+) + H2O = N-succinyl-L-glutamate + NADH + 2 H(+). Its pathway is amino-acid degradation; L-arginine degradation via AST pathway; L-glutamate and succinate from L-arginine: step 4/5. Catalyzes the NAD-dependent reduction of succinylglutamate semialdehyde into succinylglutamate. This chain is N-succinylglutamate 5-semialdehyde dehydrogenase, found in Salmonella typhi.